A 313-amino-acid chain; its full sequence is Ribosomal protein L11 methyltransferase (313 aa).

The S-adenosyl-L-methionine site is built by Thr-151, Gly-172, Asp-194, and Asn-245.

The protein belongs to the methyltransferase superfamily. PrmA family.

The protein localises to the cytoplasm. The enzyme catalyses L-lysyl-[protein] + 3 S-adenosyl-L-methionine = N(6),N(6),N(6)-trimethyl-L-lysyl-[protein] + 3 S-adenosyl-L-homocysteine + 3 H(+). Functionally, methylates ribosomal protein L11. This chain is Ribosomal protein L11 methyltransferase, found in Nitrosomonas europaea (strain ATCC 19718 / CIP 103999 / KCTC 2705 / NBRC 14298).